We begin with the raw amino-acid sequence, 874 residues long: Coatomer subunit gamma-1 (874 aa).

The segment covering 1–11 has biased composition (basic and acidic residues); it reads MLKKFDKKDEE. The tract at residues 1-21 is disordered; that stretch reads MLKKFDKKDEESGGGSNPLQH. 4 HEAT repeats span residues 64–101, 283–320, 322–355, and 356–392; these read TEAT…IAED, KELA…KHPS, VTAC…GSES, and SIDR…KYPR. Threonine 594 bears the Phosphothreonine mark. Residues 609-874 form an interaction with ZNF289/ARFGAP2 region; the sequence is RQEIFQEQLA…PVDIILASVG (266 aa).

The protein belongs to the COPG family. As to quaternary structure, oligomeric complex that consists of at least the alpha, beta, beta', gamma, delta, epsilon and zeta subunits. Interacts with ZNF289/ARFGAP2 through its C-terminal appendage domain. Interacts with EGFR upon EGF treatment; interaction is essential for regulation of EGF-dependent nuclear transport of EGFR by retrograde trafficking from the Golgi to the ER. The coatomer interacts with KDEL receptors; the interaction is important for retrograde trafficking of KDEL-bearing proteins from the Golgi to the endoplasmic reticulum. Interacts with COPB1. Interacts with TMED10 (via C-terminus). Interacts with TMED2, TMED3, TMED7 and TMED9.

Its subcellular location is the cytoplasm. It is found in the cytosol. It localises to the golgi apparatus membrane. The protein localises to the cytoplasmic vesicle. The protein resides in the COPI-coated vesicle membrane. The coatomer is a cytosolic protein complex that binds to dilysine motifs and reversibly associates with Golgi non-clathrin-coated vesicles, which further mediate biosynthetic protein transport from the ER, via the Golgi up to the trans Golgi network. Coatomer complex is required for budding from Golgi membranes, and is essential for the retrograde Golgi-to-ER transport of dilysine-tagged proteins. In mammals, the coatomer can only be recruited by membranes associated to ADP-ribosylation factors (ARFs), which are small GTP-binding proteins; the complex also influences the Golgi structural integrity, as well as the processing, activity, and endocytic recycling of LDL receptors. Required for limiting lipid storage in lipid droplets. Involved in lipid homeostasis by regulating the presence of perilipin family members PLIN2 and PLIN3 at the lipid droplet surface and promoting the association of adipocyte triglyceride lipase (PNPLA2) with the lipid droplet surface to mediate lipolysis. The chain is Coatomer subunit gamma-1 (Copg1) from Rattus norvegicus (Rat).